The sequence spans 743 residues: Fork head transcription factor 1 (743 aa).

Residues 39 to 94 (VTMGRKASNSSDCDVHLGDTKAISRQHAKIFYSFPNQRFEISVMGKNGAFVDGEFV) enclose the FHA domain. Disordered regions lie at residues 214-291 (QPPK…ATQK), 411-450 (GISA…LQNG), and 529-743 (QMQG…SSYT). Positions 221–230 (VSPSSIQRLS) are enriched in polar residues. Residues 291-385 (KPNLSYANLI…EGNFFRRTKK (95 aa)) constitute a DNA-binding region (fork-head). Positions 434-443 (SRGENVEDRP) are enriched in basic and acidic residues. Positions 529 to 539 (QMQGPQQVQQQ) are enriched in low complexity. Polar residues predominate over residues 562-576 (NITSPSPSISVTQRP). The span at 614-624 (SAGPSSVRSSS) shows a compositional bias: low complexity. Composition is skewed to polar residues over residues 625–643 (YNST…QNLH), 670–686 (TGNQ…ASSF), and 695–726 (ENGS…NSSD).

The protein localises to the nucleus. Its function is as follows. Acts as a transcriptional activator for ribosomal protein genes (RPG) that contain a HomolE UAS (upstream activating sequence) in addition to a HomolD promoter element; HomolD plays the role of a TATA box in RPG promoters that do not contain a canonical TATA sequence. Binds to HomolE elements with consensus sequence 3'-ACCCTACCCT-5' (or its inverted form AGGGTAGGGT). This chain is Fork head transcription factor 1, found in Schizosaccharomyces pombe (strain 972 / ATCC 24843) (Fission yeast).